Consider the following 361-residue polypeptide: Porphobilinogen deaminase (361 aa).

Cys-265 carries the S-(dipyrrolylmethanemethyl)cysteine modification. Positions 341–361 are disordered; the sequence is LPPSSNTPTPQPITPITTNNS.

This sequence belongs to the HMBS family. The cofactor is dipyrromethane.

The catalysed reaction is 4 porphobilinogen + H2O = hydroxymethylbilane + 4 NH4(+). It functions in the pathway porphyrin-containing compound metabolism; protoporphyrin-IX biosynthesis; coproporphyrinogen-III from 5-aminolevulinate: step 2/4. In terms of biological role, tetrapolymerization of the monopyrrole PBG into the hydroxymethylbilane pre-uroporphyrinogen in several discrete steps. The protein is Porphobilinogen deaminase (HEM3) of Debaryomyces hansenii (strain ATCC 36239 / CBS 767 / BCRC 21394 / JCM 1990 / NBRC 0083 / IGC 2968) (Yeast).